The following is a 329-amino-acid chain: Fructose-1,6-bisphosphatase class 1 (329 aa).

Residues glutamate 84, aspartate 103, leucine 105, and aspartate 106 each contribute to the Mg(2+) site. Substrate is bound by residues 106-109 (DGSS), asparagine 196, and lysine 262. Glutamate 268 is a binding site for Mg(2+).

It belongs to the FBPase class 1 family. In terms of assembly, homotetramer. Mg(2+) serves as cofactor.

It is found in the cytoplasm. It carries out the reaction beta-D-fructose 1,6-bisphosphate + H2O = beta-D-fructose 6-phosphate + phosphate. Its pathway is carbohydrate biosynthesis; gluconeogenesis. This Shewanella pealeana (strain ATCC 700345 / ANG-SQ1) protein is Fructose-1,6-bisphosphatase class 1.